The primary structure comprises 482 residues: Dihydrolipoyllysine-residue acetyltransferase component of pyruvate dehydrogenase complex, mitochondrial (482 aa).

The N-terminal 28 residues, 1–28 (MSAFVRVVPRISRSSVLTRSLRLQLRCY), are a transit peptide targeting the mitochondrion. Residues 34–110 (HTIIGMPALS…PVNKPIAVYV (77 aa)) form the Lipoyl-binding domain. Residue lysine 75 is modified to N6-lipoyllysine. A disordered region spans residues 122 to 170 (FKLEDSGSDSKTSTKAQPAEPQAEKKQEAPAEETKTSAPEAKKSDVAAP). Positions 143–166 (QAEKKQEAPAEETKTSAPEAKKSD) are enriched in basic and acidic residues. A Peripheral subunit-binding (PSBD) domain is found at 175–212 (FASPLAKTIALEKGISLKDVHGTGPRGRITKADIESYL). The disordered stretch occupies residues 214 to 251 (KSSKQSSQTSGAAAATPAAATSSTTAGSAPSPSSTASY). Residues 217 to 250 (KQSSQTSGAAAATPAAATSSTTAGSAPSPSSTAS) are compositionally biased toward low complexity. Residues histidine 455 and aspartate 459 contribute to the active site.

Belongs to the 2-oxoacid dehydrogenase family. Eukaryotic pyruvate dehydrogenase (PDH) complexes are organized as a core consisting of the oligomeric dihydrolipoamide acetyl-transferase (E2), around which are arranged multiple copies of pyruvate dehydrogenase (E1), dihydrolipoamide dehydrogenase (E3) and protein X (E3BP) bound by non-covalent bonds. (R)-lipoate is required as a cofactor.

The protein localises to the mitochondrion matrix. It carries out the reaction N(6)-[(R)-dihydrolipoyl]-L-lysyl-[protein] + acetyl-CoA = N(6)-[(R)-S(8)-acetyldihydrolipoyl]-L-lysyl-[protein] + CoA. The pyruvate dehydrogenase complex catalyzes the overall conversion of pyruvate to acetyl-CoA and CO(2). This chain is Dihydrolipoyllysine-residue acetyltransferase component of pyruvate dehydrogenase complex, mitochondrial (LAT1), found in Saccharomyces cerevisiae (strain ATCC 204508 / S288c) (Baker's yeast).